Consider the following 177-residue polypeptide: Ribulose bisphosphate carboxylase small subunit, chloroplastic (177 aa).

A chloroplast-targeting transit peptide spans 1–55; the sequence is MASLMSNAAVVTASTAAQANMVAPFSGLKSTSAFPVSRKSNVDITSLATNGGRVN.

It belongs to the RuBisCO small chain family. In terms of assembly, heterohexadecamer of 8 large and 8 small subunits.

It is found in the plastid. The protein resides in the chloroplast. RuBisCO catalyzes two reactions: the carboxylation of D-ribulose 1,5-bisphosphate, the primary event in carbon dioxide fixation, as well as the oxidative fragmentation of the pentose substrate. Both reactions occur simultaneously and in competition at the same active site. Although the small subunit is not catalytic it is essential for maximal activity. The polypeptide is Ribulose bisphosphate carboxylase small subunit, chloroplastic (Silene latifolia subsp. alba (White campion)).